Reading from the N-terminus, the 370-residue chain is Putative glutamate--cysteine ligase 2 (370 aa).

The protein belongs to the glutamate--cysteine ligase type 2 family. YbdK subfamily.

It carries out the reaction L-cysteine + L-glutamate + ATP = gamma-L-glutamyl-L-cysteine + ADP + phosphate + H(+). In terms of biological role, ATP-dependent carboxylate-amine ligase which exhibits weak glutamate--cysteine ligase activity. This chain is Putative glutamate--cysteine ligase 2, found in Herminiimonas arsenicoxydans.